The chain runs to 686 residues: Glycine--tRNA ligase beta subunit (686 aa).

It belongs to the class-II aminoacyl-tRNA synthetase family. Tetramer of two alpha and two beta subunits.

Its subcellular location is the cytoplasm. The catalysed reaction is tRNA(Gly) + glycine + ATP = glycyl-tRNA(Gly) + AMP + diphosphate. The polypeptide is Glycine--tRNA ligase beta subunit (Halothermothrix orenii (strain H 168 / OCM 544 / DSM 9562)).